A 267-amino-acid chain; its full sequence is Undecaprenyl-diphosphatase (267 aa).

The next 8 helical transmembrane spans lie at 1–21 (MSYF…FLPI), 39–59 (QGLA…VIYF), 83–103 (AKLA…GLLM), 111–131 (LRSA…LWWV), 144–164 (TGWK…IPGT), 189–209 (FLMS…KLVT), 218–238 (FLLT…HFFL), and 246–266 (MTPF…FLLM).

The protein belongs to the UppP family.

The protein resides in the cell inner membrane. It carries out the reaction di-trans,octa-cis-undecaprenyl diphosphate + H2O = di-trans,octa-cis-undecaprenyl phosphate + phosphate + H(+). Its function is as follows. Catalyzes the dephosphorylation of undecaprenyl diphosphate (UPP). Confers resistance to bacitracin. The polypeptide is Undecaprenyl-diphosphatase (Vibrio campbellii (strain ATCC BAA-1116)).